A 763-amino-acid polypeptide reads, in one-letter code: 5-methyltetrahydropteroyltriglutamate--homocysteine methyltransferase (763 aa).

Residues 16–19 (RELK) and Lys114 contribute to the 5-methyltetrahydropteroyltri-L-glutamate site. Residues 438 to 440 (IGS) and Glu491 each bind L-homocysteine. L-methionine contacts are provided by residues 438 to 440 (IGS) and Glu491. 5-methyltetrahydropteroyltri-L-glutamate-binding positions include 522–523 (RC) and Trp568. Asp606 contributes to the L-homocysteine binding site. An L-methionine-binding site is contributed by Asp606. Glu612 serves as a coordination point for 5-methyltetrahydropteroyltri-L-glutamate. Zn(2+)-binding residues include His648, Cys650, and Glu672. His701 serves as the catalytic Proton donor. Cys733 is a binding site for Zn(2+).

This sequence belongs to the vitamin-B12 independent methionine synthase family. Zn(2+) serves as cofactor.

The catalysed reaction is 5-methyltetrahydropteroyltri-L-glutamate + L-homocysteine = tetrahydropteroyltri-L-glutamate + L-methionine. It participates in amino-acid biosynthesis; L-methionine biosynthesis via de novo pathway; L-methionine from L-homocysteine (MetE route): step 1/1. Functionally, catalyzes the transfer of a methyl group from 5-methyltetrahydrofolate to homocysteine resulting in methionine formation. The protein is 5-methyltetrahydropteroyltriglutamate--homocysteine methyltransferase of Parvibaculum lavamentivorans (strain DS-1 / DSM 13023 / NCIMB 13966).